The chain runs to 430 residues: Serine--tRNA ligase (430 aa).

Position 231–233 (231–233) interacts with L-serine; the sequence is TSE. An ATP-binding site is contributed by 262–264; it reads RSE. Glu-285 serves as a coordination point for L-serine. Residue 349–352 coordinates ATP; the sequence is EISS. L-serine is bound at residue Ser-385.

The protein belongs to the class-II aminoacyl-tRNA synthetase family. Type-1 seryl-tRNA synthetase subfamily. As to quaternary structure, homodimer. The tRNA molecule binds across the dimer.

It localises to the cytoplasm. The catalysed reaction is tRNA(Ser) + L-serine + ATP = L-seryl-tRNA(Ser) + AMP + diphosphate + H(+). The enzyme catalyses tRNA(Sec) + L-serine + ATP = L-seryl-tRNA(Sec) + AMP + diphosphate + H(+). It participates in aminoacyl-tRNA biosynthesis; selenocysteinyl-tRNA(Sec) biosynthesis; L-seryl-tRNA(Sec) from L-serine and tRNA(Sec): step 1/1. Catalyzes the attachment of serine to tRNA(Ser). Is also able to aminoacylate tRNA(Sec) with serine, to form the misacylated tRNA L-seryl-tRNA(Sec), which will be further converted into selenocysteinyl-tRNA(Sec). The chain is Serine--tRNA ligase from Jannaschia sp. (strain CCS1).